The chain runs to 273 residues: Formamidopyrimidine-DNA glycosylase (273 aa).

The active-site Schiff-base intermediate with DNA is the Pro2. The active-site Proton donor is the Glu3. Lys58 functions as the Proton donor; for beta-elimination activity in the catalytic mechanism. DNA is bound by residues His92, Arg111, and Lys153. The segment at 238–272 (KVYGREGQSCLSCSSTIIKIKHSGRSTFYCKTCQY) adopts an FPG-type zinc-finger fold. The active-site Proton donor; for delta-elimination activity is Arg262.

This sequence belongs to the FPG family. In terms of assembly, monomer. Zn(2+) serves as cofactor.

The catalysed reaction is Hydrolysis of DNA containing ring-opened 7-methylguanine residues, releasing 2,6-diamino-4-hydroxy-5-(N-methyl)formamidopyrimidine.. It carries out the reaction 2'-deoxyribonucleotide-(2'-deoxyribose 5'-phosphate)-2'-deoxyribonucleotide-DNA = a 3'-end 2'-deoxyribonucleotide-(2,3-dehydro-2,3-deoxyribose 5'-phosphate)-DNA + a 5'-end 5'-phospho-2'-deoxyribonucleoside-DNA + H(+). Functionally, involved in base excision repair of DNA damaged by oxidation or by mutagenic agents. Acts as a DNA glycosylase that recognizes and removes damaged bases. Has a preference for oxidized purines, such as 7,8-dihydro-8-oxoguanine (8-oxoG). Has AP (apurinic/apyrimidinic) lyase activity and introduces nicks in the DNA strand. Cleaves the DNA backbone by beta-delta elimination to generate a single-strand break at the site of the removed base with both 3'- and 5'-phosphates. This chain is Formamidopyrimidine-DNA glycosylase, found in Rickettsia peacockii (strain Rustic).